The primary structure comprises 162 residues: NADH-quinone oxidoreductase subunit I (162 aa).

2 4Fe-4S ferredoxin-type domains span residues 53 to 83 and 93 to 122; these read LRRY…IEAE and TRYD…EGPN. Cys63, Cys66, Cys69, Cys73, Cys102, Cys105, Cys108, and Cys112 together coordinate [4Fe-4S] cluster.

It belongs to the complex I 23 kDa subunit family. As to quaternary structure, NDH-1 is composed of 14 different subunits. Subunits NuoA, H, J, K, L, M, N constitute the membrane sector of the complex. [4Fe-4S] cluster serves as cofactor.

Its subcellular location is the cell inner membrane. It carries out the reaction a quinone + NADH + 5 H(+)(in) = a quinol + NAD(+) + 4 H(+)(out). Its function is as follows. NDH-1 shuttles electrons from NADH, via FMN and iron-sulfur (Fe-S) centers, to quinones in the respiratory chain. The immediate electron acceptor for the enzyme in this species is believed to be ubiquinone. Couples the redox reaction to proton translocation (for every two electrons transferred, four hydrogen ions are translocated across the cytoplasmic membrane), and thus conserves the redox energy in a proton gradient. In Sphingopyxis alaskensis (strain DSM 13593 / LMG 18877 / RB2256) (Sphingomonas alaskensis), this protein is NADH-quinone oxidoreductase subunit I.